Here is a 505-residue protein sequence, read N- to C-terminus: Glycerol kinase 3 (505 aa).

Residue threonine 12 coordinates ADP. ATP-binding residues include threonine 12, threonine 13, and serine 14. Threonine 12 provides a ligand contact to sn-glycerol 3-phosphate. Arginine 16 contacts ADP. 4 residues coordinate sn-glycerol 3-phosphate: arginine 82, glutamate 83, tyrosine 134, and aspartate 249. Arginine 82, glutamate 83, tyrosine 134, aspartate 249, and glutamine 250 together coordinate glycerol. Residues threonine 271 and glycine 315 each coordinate ADP. Residues threonine 271, glycine 315, glutamine 319, and glycine 416 each contribute to the ATP site. ADP-binding residues include glycine 416 and asparagine 420.

This sequence belongs to the FGGY kinase family.

The enzyme catalyses glycerol + ATP = sn-glycerol 3-phosphate + ADP + H(+). It participates in polyol metabolism; glycerol degradation via glycerol kinase pathway; sn-glycerol 3-phosphate from glycerol: step 1/1. Its activity is regulated as follows. Inhibited by fructose 1,6-bisphosphate (FBP). Functionally, key enzyme in the regulation of glycerol uptake and metabolism. Catalyzes the phosphorylation of glycerol to yield sn-glycerol 3-phosphate. In Streptomyces avermitilis (strain ATCC 31267 / DSM 46492 / JCM 5070 / NBRC 14893 / NCIMB 12804 / NRRL 8165 / MA-4680), this protein is Glycerol kinase 3.